We begin with the raw amino-acid sequence, 64 residues long: Palmitoyl-CoA hydrolase (64 aa).

This sequence belongs to the type-B carboxylesterase/lipase family. In terms of assembly, monomer and homotrimer.

The protein resides in the microsome. It is found in the endoplasmic reticulum. It catalyses the reaction hexadecanoyl-CoA + H2O = hexadecanoate + CoA + H(+). Functionally, hydrolysis of a variety of CoA thioesters of long-chain fatty acids. This is Palmitoyl-CoA hydrolase from Rattus norvegicus (Rat).